Consider the following 276-residue polypeptide: Aurora kinase C (276 aa).

Residues 16 to 266 (FEIGRPLGRG…LAQVLKHPWV (251 aa)) form the Protein kinase domain. ATP contacts are provided by residues 22 to 30 (LGRGKFGRV) and lysine 45. The Proton acceptor role is filled by aspartate 139. Threonine 171 is subject to Phosphothreonine; by PKA.

This sequence belongs to the protein kinase superfamily. Ser/Thr protein kinase family. Aurora subfamily. In terms of assembly, component of the chromosomal passenger complex (CPC) composed of at least BIRC5/survivin, CDCA8/borealin, INCENP, AURKB or AURKC; predominantly independent AURKB- and AURKC-containing complexes exist; in the complex interacts directly with BIRC5/survivin and INCENP. Interacts with TACC1. Expressed only in testis.

Its subcellular location is the nucleus. The protein localises to the chromosome. It is found in the centromere. It localises to the cytoplasm. The protein resides in the cytoskeleton. Its subcellular location is the spindle. It carries out the reaction L-seryl-[protein] + ATP = O-phospho-L-seryl-[protein] + ADP + H(+). The catalysed reaction is L-threonyl-[protein] + ATP = O-phospho-L-threonyl-[protein] + ADP + H(+). Its activity is regulated as follows. Okadaic acid, an inhibitor of protein phosphatase 1 (PP1), protein phosphatase 2A (PP2A) and protein phosphatase 5 (PP5), increases AURKC activity. AURKC is also stabilized through its interaction with INCENP, which also acts as an activator. In terms of biological role, serine/threonine-protein kinase component of the chromosomal passenger complex (CPC), a complex that acts as a key regulator of mitosis. The CPC complex has essential functions at the centromere in ensuring correct chromosome alignment and segregation and is required for chromatin-induced microtubule stabilization and spindle assembly. Also plays a role in meiosis and more particularly in spermatogenesis. Has redundant cellular functions with AURKB and can rescue an AURKB knockdown. Like AURKB, AURKC phosphorylates histone H3 at 'Ser-10' and 'Ser-28'. AURKC phosphorylates the CPC complex subunits BIRC5/survivin and INCENP leading to increased AURKC activity. Phosphorylates TACC1, another protein involved in cell division, at 'Ser-228'. The polypeptide is Aurora kinase C (Aurkc) (Mus musculus (Mouse)).